We begin with the raw amino-acid sequence, 220 residues long: MSESCIDFRKAKFLISAPDIAHLNEHLPGDAGVEIAFAGRSNAGKSSALNLLTDQKSLARTSRTPGRTQLINIFELDENRRLVDLPGYGFAQVPLALKKKWQESLGEYLQERQCLGGMVVLMDIRHPLKDLDMQMIAWALESEIPVLALLTKADKLKQSERMKMVNEVRKHLGDFDDRVKVEPFSSLKGIGKAKVLGILNEWCHPQWLTDAIADAETEEE.

The region spanning 31–205 (AGVEIAFAGR…LGILNEWCHP (175 aa)) is the EngB-type G domain. Residues 39–46 (GRSNAGKS), 66–70 (GRTQL), 84–87 (DLPG), 151–154 (TKAD), and 184–186 (FSS) contribute to the GTP site. Ser-46 and Thr-68 together coordinate Mg(2+).

It belongs to the TRAFAC class TrmE-Era-EngA-EngB-Septin-like GTPase superfamily. EngB GTPase family. Mg(2+) is required as a cofactor.

Its function is as follows. Necessary for normal cell division and for the maintenance of normal septation. The chain is Probable GTP-binding protein EngB from Shewanella sediminis (strain HAW-EB3).